Here is a 198-residue protein sequence, read N- to C-terminus: Protein-L-isoaspartate O-methyltransferase (198 aa).

Residue Ser-50 is part of the active site.

It belongs to the methyltransferase superfamily. L-isoaspartyl/D-aspartyl protein methyltransferase family.

Its subcellular location is the cytoplasm. It catalyses the reaction [protein]-L-isoaspartate + S-adenosyl-L-methionine = [protein]-L-isoaspartate alpha-methyl ester + S-adenosyl-L-homocysteine. Functionally, catalyzes the methyl esterification of L-isoaspartyl residues in peptides and proteins that result from spontaneous decomposition of normal L-aspartyl and L-asparaginyl residues. It plays a role in the repair and/or degradation of damaged proteins. The sequence is that of Protein-L-isoaspartate O-methyltransferase from Thermosipho melanesiensis (strain DSM 12029 / CIP 104789 / BI429).